We begin with the raw amino-acid sequence, 417 residues long: Delta-aminolevulinic acid dehydratase, chloroplastic (417 aa).

A chloroplast-targeting transit peptide spans 1–40 (MAALLVPGGGAAPGLVWRRRRAAVQCAAASPSSPDPSWRT). The segment at 63–92 (VVSGNPPAAPAAPAKAKAPPGTPVVKPLRL) is disordered. The active-site Schiff-base intermediate with substrate is Lys-286. Residues Arg-296 and Lys-308 each contribute to the 5-aminolevulinate site. Glu-324 is a Mg(2+) binding site. Catalysis depends on Lys-339, which acts as the Schiff-base intermediate with substrate. Residues Ser-365 and Tyr-404 each contribute to the 5-aminolevulinate site.

It belongs to the ALAD family. Homooctamer. Requires Mg(2+) as cofactor.

It is found in the plastid. Its subcellular location is the chloroplast. It carries out the reaction 2 5-aminolevulinate = porphobilinogen + 2 H2O + H(+). It functions in the pathway porphyrin-containing compound metabolism; protoporphyrin-IX biosynthesis; coproporphyrinogen-III from 5-aminolevulinate: step 1/4. In terms of biological role, catalyzes an early step in the biosynthesis of tetrapyrroles. Binds two molecules of 5-aminolevulinate per subunit, each at a distinct site, and catalyzes their condensation to form porphobilinogen. This is Delta-aminolevulinic acid dehydratase, chloroplastic (HEMB) from Selaginella martensii (Martens's spike moss).